The sequence spans 204 residues: Guanylate kinase (204 aa).

The Guanylate kinase-like domain maps to 16–196; it reads AKVIIFSAPS…AKAHALKVIK (181 aa). 23-30 contributes to the ATP binding site; sequence APSGSGKS.

It belongs to the guanylate kinase family.

The protein resides in the cytoplasm. The catalysed reaction is GMP + ATP = GDP + ADP. Essential for recycling GMP and indirectly, cGMP. The protein is Guanylate kinase of Bacteroides fragilis (strain ATCC 25285 / DSM 2151 / CCUG 4856 / JCM 11019 / LMG 10263 / NCTC 9343 / Onslow / VPI 2553 / EN-2).